The following is a 101-amino-acid chain: Putative defensin-like protein 253 (101 aa).

Positions 1–23 (MRFASLFVVYCTFMFLDISHVKC) are cleaved as a signal peptide. Intrachain disulfides connect C31-C84, C41-C66, C49-C76, and C64-C78.

This sequence belongs to the DEFL family.

It localises to the secreted. In Arabidopsis thaliana (Mouse-ear cress), this protein is Putative defensin-like protein 253 (SCRL15).